Reading from the N-terminus, the 594-residue chain is UvrABC system protein C (594 aa).

Residues 14-91 (DSPGCYLHKD…IQENMPKYNI (78 aa)) enclose the GIY-YIG domain. A UVR domain is found at 196-231 (DKIIDDLRSKMLEASNKQEFERAAEYRDLISGIATM).

This sequence belongs to the UvrC family. In terms of assembly, interacts with UvrB in an incision complex.

The protein localises to the cytoplasm. In terms of biological role, the UvrABC repair system catalyzes the recognition and processing of DNA lesions. UvrC both incises the 5' and 3' sides of the lesion. The N-terminal half is responsible for the 3' incision and the C-terminal half is responsible for the 5' incision. The chain is UvrABC system protein C from Streptococcus equi subsp. zooepidemicus (strain MGCS10565).